The sequence spans 115 residues: NADH-ubiquinone oxidoreductase chain 3 (115 aa).

Transmembrane regions (helical) follow at residues 4 to 24 (IMAMLANISISSCLIIIAFWL), 55 to 75 (FFLVGITFLLFDLEIALLLPL), and 84 to 104 (MFLTTLTSFILVSVLALGLAY).

It belongs to the complex I subunit 3 family. In terms of assembly, core subunit of respiratory chain NADH dehydrogenase (Complex I) which is composed of 45 different subunits. Interacts with TMEM186. Interacts with TMEM242.

It is found in the mitochondrion inner membrane. The enzyme catalyses a ubiquinone + NADH + 5 H(+)(in) = a ubiquinol + NAD(+) + 4 H(+)(out). Core subunit of the mitochondrial membrane respiratory chain NADH dehydrogenase (Complex I) which catalyzes electron transfer from NADH through the respiratory chain, using ubiquinone as an electron acceptor. Essential for the catalytic activity of complex I. This chain is NADH-ubiquinone oxidoreductase chain 3, found in Phyllotis darwinii (Darwin's leaf-eared mouse).